Reading from the N-terminus, the 34-residue chain is Mu-conotoxin GS (34 aa).

Cystine bridges form between Cys2–Cys14, Cys9–Cys19, and Cys13–Cys27. Residues Pro10 and Pro11 each carry the 4-hydroxyproline modification. Glu32 carries the post-translational modification 4-carboxyglutamate.

In terms of tissue distribution, expressed by the venom duct.

The protein localises to the secreted. In terms of biological role, mu-conotoxins block voltage-gated sodium channels (Nav). No effect was observed upon injections into mice and goldfish (25 ug). This Conus geographus (Geography cone) protein is Mu-conotoxin GS.